The following is a 321-amino-acid chain: MARNKIALIGSGMIGGTLAHLAGLKELGDIVLFDIADGIPQGKGLDIAQSSPVEGFDATLTGASDYAAIEGADVCIVTAGVPRKPGMSRDDLLGINLKVMEQVGAGIKKYAPNAFVICITNPLDAMVWALQKFSGLPKNKVVGMAGVLDSSRFRLFLAQEFNVSVQDITAFVLGGHGDTMVPLARYSTVAGIPLTDLVQMGWVTKERLEEIIQRTRDGGAEIVGLLKTGSAYYAPAASAIEMAEAYLKDKKRVLPCAAHLSGQYGVKDMYVGVPTVIGAGGVERIIEIDLNKGEKEAFDKSVGAVAGLCEACIGIAPSLKQ.

NAD(+) is bound by residues 10 to 15 (GSGMIG) and aspartate 34. Substrate-binding residues include arginine 83 and arginine 89. NAD(+)-binding positions include asparagine 96 and 119-121 (ITN). Substrate-binding residues include asparagine 121 and arginine 152. The active-site Proton acceptor is histidine 176.

This sequence belongs to the LDH/MDH superfamily. MDH type 3 family.

The catalysed reaction is (S)-malate + NAD(+) = oxaloacetate + NADH + H(+). Functionally, catalyzes the reversible oxidation of malate to oxaloacetate. The protein is Malate dehydrogenase of Sinorhizobium fredii (strain NBRC 101917 / NGR234).